We begin with the raw amino-acid sequence, 308 residues long: MAKPLKQQKIAVLLGGTSAEREVSLNSGNAVLTALRNQGFDAHPIDPKEYPVAMLKEQGFDRVFNILHGRGGEDGTIQGLLEQIGLPYTGCGVMASALTMDKMRTKMLWKAFGLPVADMEVVTRTSFSQLNPQVVVEKLGLPLMVKPSLEGSSVGLTKVNAIDDLKSAVEFALQYDETVLIEEWLSGDELTVPVLGNEVLPSIKIVPQGEFYDYEAKYIADNTQYFCPSGLTEEREQELRQLVKQAYDVVGCRGWSRIDVMLDGEGKFRLVEVNTNPGMTSHSLFPKSAATVGYSFEQLVVKILELSL.

Residues 106–305 enclose the ATP-grasp domain; it reads KMLWKAFGLP…FEQLVVKILE (200 aa). 136–191 contacts ATP; the sequence is VEKLGLPLMVKPSLEGSSVGLTKVNAIDDLKSAVEFALQYDETVLIEEWLSGDELT. Mg(2+) contacts are provided by Asp-259, Glu-272, and Asn-274.

This sequence belongs to the D-alanine--D-alanine ligase family. Mg(2+) serves as cofactor. Requires Mn(2+) as cofactor.

The protein localises to the cytoplasm. It carries out the reaction 2 D-alanine + ATP = D-alanyl-D-alanine + ADP + phosphate + H(+). Its pathway is cell wall biogenesis; peptidoglycan biosynthesis. Functionally, cell wall formation. The protein is D-alanine--D-alanine ligase of Histophilus somni (strain 2336) (Haemophilus somnus).